A 590-amino-acid polypeptide reads, in one-letter code: Multidrug and toxin extrusion protein 1 (590 aa).

Residues 1 to 59 (MDSITSYNVTQMNGDTKQEKCDDVLSTSSTQKFCGGCRKKLRSLLPVNYKTEIVELLKL) lie on the Cytoplasmic side of the membrane. A helical transmembrane segment spans residues 60-80 (AGPVFISQLMIFLISFVSTVF). Residues 81–88 (CGHLGKTE) lie on the Extracellular side of the membrane. A helical transmembrane segment spans residues 89 to 109 (LAGVALAIAVINVTGISIGSG). Over 110–137 (LASACDTLISQTFGSNNLKRVGVILQRG) the chain is Cytoplasmic. A helical membrane pass occupies residues 138–158 (ILILLLACFPCWALLINTEPI). The Extracellular segment spans residues 159 to 167 (LLAVRQSPN). The helical transmembrane segment at 168–188 (VASLSQLYVKIFMPALPAAFM) threads the bilayer. The Cytoplasmic portion of the chain corresponds to 189–199 (YQLQGRYLQNQ). Residues 200-222 (GIIWPQVITGAAGNILNALINYV) traverse the membrane as a helical segment. The Extracellular portion of the chain corresponds to 223 to 231 (FLHLLELGV). The helical transmembrane segment at 232 to 254 (AGSAAANTISQYSLAVFLYVYIR) threads the bilayer. Residues 255–274 (WKNLHKATWDGWSRDCLQEW) lie on the Cytoplasmic side of the membrane. A helical transmembrane segment spans residues 275 to 294 (GAFIRLALPSMLMLCVEWWT). The Extracellular portion of the chain corresponds to 295–313 (YEIGGFLAGLISETELGAQ). Residues 314 to 334 (SVVYELATIAYMFPLGFAVAA) form a helical membrane-spanning segment. Over 335 to 351 (SVRVGNALGAGNTERAK) the chain is Cytoplasmic. A helical transmembrane segment spans residues 352-372 (LSAKVALVCGVLVSCVVATLI). Topologically, residues 373–395 (GCTKDVIAYIFTTEEEIVSRVSQ) are extracellular. The chain crosses the membrane as a helical span at residues 396–416 (VMIMYGFFHLFDAIAGITGGI). Residues 417–430 (VRGAGKQLLGALCN) are Cytoplasmic-facing. The chain crosses the membrane as a helical span at residues 431–451 (IVGYYFVGFPTGVSLMFALSM). Position 452 (G452) is a topological domain, extracellular. A helical transmembrane segment spans residues 453 to 473 (IIGLWIGFFGCVFLQSLFFII). Residues 474–565 (LIYKLDWKKA…TTKQLIVRRG (92 aa)) are Cytoplasmic-facing. Residues 566–586 (LAVLLMVLILAGGIVLNEMLV) traverse the membrane as a helical segment. Topologically, residues 587-590 (RYLR) are extracellular.

Belongs to the multi antimicrobial extrusion (MATE) (TC 2.A.66.1) family.

It is found in the cell membrane. Solute transporter for tetraethylammonium (TEA), cimetidine, metformin, guanidine, N-methylnicotinamide (NMN) and also the zwitterionic cephalosporin cephalexin. Responsible for the secretion of cationic drugs across the brush border membranes. In Danio rerio (Zebrafish), this protein is Multidrug and toxin extrusion protein 1 (slc47a1).